We begin with the raw amino-acid sequence, 391 residues long: GTPase Obg (391 aa).

The region spanning 1-159 (MKFVDEAVVK…REIRLELLLL (159 aa)) is the Obg domain. Residues 160–333 (ADVGMLGLPN…LCYKLADFME (174 aa)) form the OBG-type G domain. GTP is bound by residues 166–173 (GLPNAGKS), 191–195 (FTTLI), 213–216 (DIPG), 283–286 (NKTD), and 314–316 (SAI). Residues Ser-173 and Thr-193 each coordinate Mg(2+). The segment covering 367–383 (TEEDDDDWDDCDDEDDD) has biased composition (acidic residues). A disordered region spans residues 367-391 (TEEDDDDWDDCDDEDDDGHVVYVRD).

The protein belongs to the TRAFAC class OBG-HflX-like GTPase superfamily. OBG GTPase family. As to quaternary structure, monomer. Mg(2+) serves as cofactor.

The protein localises to the cytoplasm. Functionally, an essential GTPase which binds GTP, GDP and possibly (p)ppGpp with moderate affinity, with high nucleotide exchange rates and a fairly low GTP hydrolysis rate. Plays a role in control of the cell cycle, stress response, ribosome biogenesis and in those bacteria that undergo differentiation, in morphogenesis control. This chain is GTPase Obg, found in Vibrio campbellii (strain ATCC BAA-1116).